Here is a 120-residue protein sequence, read N- to C-terminus: Glycine cleavage system H protein (120 aa).

Positions 17 to 99 (VATVGITTYA…QGAGWFFKLK (83 aa)) constitute a Lipoyl-binding domain. K58 carries the post-translational modification N6-lipoyllysine.

Belongs to the GcvH family. In terms of assembly, the glycine cleavage system is composed of four proteins: P, T, L and H. The cofactor is (R)-lipoate.

The glycine cleavage system catalyzes the degradation of glycine. The H protein shuttles the methylamine group of glycine from the P protein to the T protein. This is Glycine cleavage system H protein from Rhizobium etli (strain CIAT 652).